The following is a 783-amino-acid chain: Ras and Rab interactor 1 (783 aa).

An N-acetylmethionine modification is found at Met-1. The disordered stretch occupies residues 1–53 (MESPGESGAGSPGAPSPSSFTTGHLAREKPAQDPLYDVPNASGGQAGGPQRPG). Phosphoserine is present on residues Ser-3 and Ser-16. Tyr-36 carries the phosphotyrosine; by ABL1 and ABL2 modification. An SH2 domain is found at 69-163 (WLQLQANAAA…ILLLPLQLPR (95 aa)). Residues Ser-210, Ser-258, Ser-333, and Ser-337 each carry the phosphoserine modification. 2 disordered regions span residues 250 to 282 (STET…ERLP) and 295 to 342 (YRVP…HLGR). Pro residues predominate over residues 257–269 (LSPPAVPPPPVPV). Positions 294 to 727 (GYRVPAGSGP…GSGQSEARSR (434 aa)) are ras and 14-3-3 protein binding region. Residues 317–334 (GSPSSSEEEGVPGSRGSP) show a composition bias toward low complexity. Ser-351 is modified (phosphoserine; by PKD/PRKD1). Positions 456–598 (LAADGSLGRL…LSGLGQAHTL (143 aa)) constitute a VPS9 domain. Residues Ser-609 and Ser-611 each carry the phosphoserine modification. The 83-residue stretch at 624 to 706 (FQHLLRVAYQ…GYLVYRRAEW (83 aa)) folds into the Ras-associating domain. Arg-692 carries the omega-N-methylarginine modification. The disordered stretch occupies residues 709 to 783 (TQGAVTEEEG…EAEGSRAAEE (75 aa)). Low complexity predominate over residues 762-772 (QAQEGPAQPGE).

This sequence belongs to the RIN (Ras interaction/interference) family. In terms of assembly, interacts with the GTP-bound form of Ras proteins (NRAS, HRAS and KRAS). This interaction prevents the association between RAF1 and Ras. Interacts with 14-3-3 proteins YWHAB, YWHAE and YWHAZ when phosphorylated on Ser-351. Interacts with the SH3 domain of ABL1 and ABL2. Interacts with RAB5A. The interaction with Ras is probably regulated and antagonized by the interaction with 14-3-3 proteins. The interaction with 14-3-3 proteins is regulated by phosphorylation on Ser-351. Post-translationally, phosphorylated on tyrosine residues by ABL1 and ABL2. Phosphorylation at Ser-351 by PRKD1 induces interaction with 14-3-3 proteins. As to expression, expressed in all tissues examined with high levels in brain, placenta and pancreas.

Its subcellular location is the cytoplasm. It localises to the membrane. The protein localises to the cytoskeleton. Functionally, ras effector protein, which may serve as an inhibitory modulator of neuronal plasticity in aversive memory formation. Can affect Ras signaling at different levels. First, by competing with RAF1 protein for binding to activated Ras. Second, by enhancing signaling from ABL1 and ABL2, which regulate cytoskeletal remodeling. Third, by activating RAB5A, possibly by functioning as a guanine nucleotide exchange factor (GEF) for RAB5A, by exchanging bound GDP for free GTP, and facilitating Ras-activated receptor endocytosis. This Homo sapiens (Human) protein is Ras and Rab interactor 1 (RIN1).